The following is a 141-amino-acid chain: Nucleoside diphosphate kinase (141 aa).

ATP-binding residues include lysine 11, phenylalanine 59, arginine 87, threonine 93, arginine 104, and asparagine 114. The active-site Pros-phosphohistidine intermediate is the histidine 117.

It belongs to the NDK family. Homotetramer. The cofactor is Mg(2+).

Its subcellular location is the cytoplasm. The catalysed reaction is a 2'-deoxyribonucleoside 5'-diphosphate + ATP = a 2'-deoxyribonucleoside 5'-triphosphate + ADP. It catalyses the reaction a ribonucleoside 5'-diphosphate + ATP = a ribonucleoside 5'-triphosphate + ADP. In terms of biological role, major role in the synthesis of nucleoside triphosphates other than ATP. The ATP gamma phosphate is transferred to the NDP beta phosphate via a ping-pong mechanism, using a phosphorylated active-site intermediate. This is Nucleoside diphosphate kinase from Yersinia enterocolitica serotype O:8 / biotype 1B (strain NCTC 13174 / 8081).